Here is a 363-residue protein sequence, read N- to C-terminus: Protein Wnt-5b (363 aa).

A signal peptide spans 1-21 (MDVRMNQGHLLLAVTLIVCNS). Cysteine 87 and cysteine 98 are disulfide-bonded. Residues asparagine 97 and asparagine 103 are each glycosylated (N-linked (GlcNAc...) asparagine). Intrachain disulfides connect cysteine 137-cysteine 145, cysteine 147-cysteine 165, cysteine 221-cysteine 235, cysteine 223-cysteine 230, cysteine 292-cysteine 323, cysteine 308-cysteine 318, cysteine 322-cysteine 362, cysteine 338-cysteine 353, cysteine 340-cysteine 350, and cysteine 345-cysteine 346. Serine 227 is lipidated: O-palmitoleoyl serine; by PORCN. 2 N-linked (GlcNAc...) asparagine glycosylation sites follow: asparagine 295 and asparagine 309.

It belongs to the Wnt family. In terms of processing, palmitoleoylation is required for efficient binding to frizzled receptors. Depalmitoleoylation leads to Wnt signaling pathway inhibition.

It is found in the secreted. The protein resides in the extracellular space. Its subcellular location is the extracellular matrix. Its function is as follows. Ligand for members of the frizzled family of seven transmembrane receptors. Can activate or inhibit canonical Wnt signaling, depending on receptor context. Required during embryogenesis for extension of the primary anterior-posterior axis. Regulates convergent extension movements and hypaxial myogenesis during gastrulation via activation of non-canonical Wnt signaling. The sequence is that of Protein Wnt-5b (wnt5b) from Danio rerio (Zebrafish).